The sequence spans 341 residues: uncharacterized protein (341 aa).

Active-site residues include Ser111, Asp247, and His275.

This sequence belongs to the DmpD/TodF/XylF esterase family.

This is an uncharacterized protein from Mycobacterium bovis (strain ATCC BAA-935 / AF2122/97).